The primary structure comprises 700 residues: MIRAMTTPAAVIVDATAYAQAVEDAAHAAAAYYAGGSSPLDDDAYDRLARGIAAWEAEHPDEVLPDSPTGKVAGGAAEGDVPHTVPMLSLDNVFSPEEFTVWTASLARRIDREVTRFSVGPKLDGLAVAARYREGRLTRLITRGDGTAGEDVSHAIGTVEGLPGTLAEPVTVEVRGEILMTTAQFEHANEVRIRHGGQPFANPRNAAAGTLRAKERAYTVPMTFFGYGLLALPGTDAALAGRLEELPYSELMETAAGLGVHTSAGTAVPDVVVGTPEQVVARVQEIAALRAELPFGIDGIVVKADLAADRRAAGSGSRAPRWAIAYKLPAVEKITRLLEVEWNVGRTGIIAPRGVLEPVVIEGSTITYATLHNPADITRRGLRLGDHVMVHRAGDVIPRIEAPVAHLRTGEEQPIVFPEACPRCGSDIDTSEERWRCAQGRNCHLVASLAYAAGRDQLDIEGLGTTRVVQLVEAGLVADLADLFLLRREQLLALERMGETSTDNLLAALARAKEQPLSRVLCALGVRGTGRSMSRRIARYFATMDHIRAADAEAMQRVDGIGVEKAPSVVAEIAELAPLIDRLAAAGVNMTEPGATPPRPADTDGADGATAEAPGDGGPLAGMKVVVTGAMTGNLERLSRNEMNELIERAGGRSSSSVSKNTSLVVAGEGAGSKRAKAEQLGVRLATPEEFAVLVAGLLS.

Residues 42 to 46 (DDAYD) and 89 to 90 (SL) contribute to the NAD(+) site. The N6-AMP-lysine intermediate role is filled by Lys122. Residues Arg143, Glu177, Lys303, and Lys327 each contribute to the NAD(+) site. Residues Cys421, Cys424, Cys437, and Cys443 each contribute to the Zn(2+) site. Residues 590-621 (MTEPGATPPRPADTDGADGATAEAPGDGGPLA) form a disordered region. One can recognise a BRCT domain in the interval 615–700 (GDGGPLAGMK…FAVLVAGLLS (86 aa)).

This sequence belongs to the NAD-dependent DNA ligase family. LigA subfamily. It depends on Mg(2+) as a cofactor. Mn(2+) serves as cofactor.

It carries out the reaction NAD(+) + (deoxyribonucleotide)n-3'-hydroxyl + 5'-phospho-(deoxyribonucleotide)m = (deoxyribonucleotide)n+m + AMP + beta-nicotinamide D-nucleotide.. Functionally, DNA ligase that catalyzes the formation of phosphodiester linkages between 5'-phosphoryl and 3'-hydroxyl groups in double-stranded DNA using NAD as a coenzyme and as the energy source for the reaction. It is essential for DNA replication and repair of damaged DNA. The sequence is that of DNA ligase 2 from Streptomyces coelicolor (strain ATCC BAA-471 / A3(2) / M145).